The chain runs to 565 residues: Berberine bridge enzyme-like C-2 (565 aa).

A signal peptide spans 1 to 17 (MFPIIILISFSFTFLFA). 2 N-linked (GlcNAc...) asparagine glycosylation sites follow: asparagine 28 and asparagine 40. Cysteine 32 and cysteine 94 are joined by a disulfide. In terms of domain architecture, FAD-binding PCMH-type spans 72-248 (YMPKPTVIIL…YAWKIRLLKV (177 aa)). A Pros-8alpha-FAD histidine modification is found at histidine 109. N-linked (GlcNAc...) asparagine glycosylation is found at asparagine 363 and asparagine 502.

The protein belongs to the oxygen-dependent FAD-linked oxidoreductase family. FAD serves as cofactor.

It is found in the vacuole. It participates in alkaloid biosynthesis; nicotine biosynthesis. Functionally, involved in the biosynthesis of pyridine alkaloid natural products, leading mainly to the production of anabasine, anatabine, nicotine and nornicotine, effective deterrents against herbivores with antiparasitic and pesticide properties (neurotoxins); nornicotine serves as the precursor in the synthesis of the carcinogen compound N'-nitrosonornicotine (NNN). Catalyzes a late oxidation step subsequent to the pyridine ring condensation reaction in the biosynthesis of alkaloids. The sequence is that of Berberine bridge enzyme-like C-2 from Nicotiana tabacum (Common tobacco).